Reading from the N-terminus, the 421-residue chain is UDP-N-acetylglucosamine 1-carboxyvinyltransferase 1 (421 aa).

22-23 lines the phosphoenolpyruvate pocket; that stretch reads KN. Position 94 (Arg94) interacts with UDP-N-acetyl-alpha-D-glucosamine. Catalysis depends on Cys118, which acts as the Proton donor. Residue Cys118 is modified to 2-(S-cysteinyl)pyruvic acid O-phosphothioketal. UDP-N-acetyl-alpha-D-glucosamine contacts are provided by residues 123–127, Asp310, and Val332; that span reads RPIEL.

This sequence belongs to the EPSP synthase family. MurA subfamily.

It is found in the cytoplasm. The enzyme catalyses phosphoenolpyruvate + UDP-N-acetyl-alpha-D-glucosamine = UDP-N-acetyl-3-O-(1-carboxyvinyl)-alpha-D-glucosamine + phosphate. Its pathway is cell wall biogenesis; peptidoglycan biosynthesis. Cell wall formation. Adds enolpyruvyl to UDP-N-acetylglucosamine. The polypeptide is UDP-N-acetylglucosamine 1-carboxyvinyltransferase 1 (Clostridium perfringens (strain 13 / Type A)).